The following is a 980-amino-acid chain: Ovochymase-2 (980 aa).

A signal peptide spans 1–21 (MAETSVFSIMMLTVMTAVGRG). Positions 22-49 (ATDRPGRVSRCGERPSANASVTYNLLSR) are cleaved as a propeptide — activation peptide. A glycan (N-linked (GlcNAc...) asparagine) is linked at Asn-39. Positions 50–299 (IVGGTSAVKG…LLNWLSANLN (250 aa)) constitute a Peptidase S1 1 domain. Cys-75 and Cys-91 form a disulfide bridge. Catalysis depends on His-90, which acts as the Charge relay system. 2 residues coordinate Ca(2+): Val-112 and Glu-117. Asp-140 functions as the Charge relay system in the catalytic mechanism. 11 disulfide bridges follow: Cys-174/Cys-244, Cys-205/Cys-223, Cys-234/Cys-263, Cys-312/Cys-342, Cys-369/Cys-388, Cys-435/Cys-462, Cys-489/Cys-510, Cys-618/Cys-634, Cys-716/Cys-779, Cys-744/Cys-757, and Cys-769/Cys-798. Ser-238 acts as the Charge relay system in catalysis. CUB domains are found at residues 312 to 425 (CSTN…YQAV) and 435 to 547 (CGSV…ISFV). The 230-residue stretch at 593–822 (IIKAEEAMPN…FIPWIMETIL (230 aa)) folds into the Peptidase S1 2 domain. The propeptide at 593 to 980 (IIKAEEAMPN…WLSYSFHNQN (388 aa)) is activation peptide. N-linked (GlcNAc...) asparagine glycosylation occurs at Asn-766. The interval 835–863 (HHPLIPPDKLSQEKALLPDSPPSNDSSSS) is disordered. Asn-858 and Asn-932 each carry an N-linked (GlcNAc...) asparagine glycan.

It belongs to the peptidase S1 family. The catalytically inactive 108 kDa form is processed both N- and C-terminally to give rise to catalytically active and inactive forms. As to expression, differentially expressed in the oviductal pars recta (PR) region.

The protein resides in the secreted. It catalyses the reaction Preferential cleavage at 371-Gly-Ser-Arg-|-Trp-374 of glycoprotein gp43 in Xenopus laevis coelemic egg envelope to yield gp41.. Functionally, mediates gamete interaction by affecting the vitelline coat. The sequence is that of Ovochymase-2 (OVCH2) from Rhinella arenarum (Argentine common toad).